Consider the following 465-residue polypeptide: Cruciferin CRU4 (465 aa).

The first 22 residues, 1–22, serve as a signal peptide directing secretion; sequence MGPTSLLSFFFTFLTLFHGFTA. Intrachain disulfides connect C29/C62 and C105/C283. 2 Cupin type-1 domains span residues 34–236 and 289–438; these read LNAL…ETAQ and ENLD…QEAR. Residue T108 is modified to Phosphothreonine. Residues 112–135 form a disordered region; that stretch reads SPVFGQGQGQEQGQGQGQGQGQGF. The span at 117 to 133 shows a compositional bias: gly residues; sequence QGQGQEQGQGQGQGQGQ. Y306 bears the Phosphotyrosine mark. Phosphoserine is present on residues S308 and S443.

The protein belongs to the 11S seed storage protein (globulins) family. Heterohexamer; each subunit is composed of an acidic and a basic chain derived from a single precursor and linked by a disulfide bond.

Its subcellular location is the rough endoplasmic reticulum. In terms of biological role, this is a seed storage protein. The polypeptide is Cruciferin CRU4 (CRU4) (Brassica napus (Rape)).